Consider the following 417-residue polypeptide: Gamma-glutamyl phosphate reductase (417 aa).

This sequence belongs to the gamma-glutamyl phosphate reductase family.

Its subcellular location is the cytoplasm. The enzyme catalyses L-glutamate 5-semialdehyde + phosphate + NADP(+) = L-glutamyl 5-phosphate + NADPH + H(+). Its pathway is amino-acid biosynthesis; L-proline biosynthesis; L-glutamate 5-semialdehyde from L-glutamate: step 2/2. Its function is as follows. Catalyzes the NADPH-dependent reduction of L-glutamate 5-phosphate into L-glutamate 5-semialdehyde and phosphate. The product spontaneously undergoes cyclization to form 1-pyrroline-5-carboxylate. The protein is Gamma-glutamyl phosphate reductase of Serratia proteamaculans (strain 568).